We begin with the raw amino-acid sequence, 218 residues long: Glutathione S-transferase Mu 3 (218 aa).

Residues 2 to 88 (PMTLGYWNTR…YLGRKHNLCG (87 aa)) form the GST N-terminal domain. Glutathione contacts are provided by residues 7-8 (YW), 46-50 (WLSEK), and 59-60 (NL). Lys-50 participates in a covalent cross-link: Glycyl lysine isopeptide (Lys-Gly) (interchain with G-Cter in SUMO2). Lys-69 is covalently cross-linked (Glycyl lysine isopeptide (Lys-Gly) (interchain with G-Cter in SUMO2)). Residue 72 to 73 (QS) coordinates glutathione. Residues 90 to 208 (TEEERIRVDT…KSSRFLPRPV (119 aa)) form the GST C-terminal domain.

The protein belongs to the GST superfamily. Mu family. Homodimer.

Its subcellular location is the cytoplasm. The enzyme catalyses RX + glutathione = an S-substituted glutathione + a halide anion + H(+). Its function is as follows. Conjugation of reduced glutathione to a wide number of exogenous and endogenous hydrophobic electrophiles. The chain is Glutathione S-transferase Mu 3 (Gstm3) from Mus musculus (Mouse).